The sequence spans 100 residues: A-type ATP synthase subunit F (100 aa).

Belongs to the V-ATPase F subunit family. Has multiple subunits with at least A(3), B(3), C, D, E, F, H, I and proteolipid K(x).

Its subcellular location is the cell membrane. In terms of biological role, component of the A-type ATP synthase that produces ATP from ADP in the presence of a proton gradient across the membrane. This chain is A-type ATP synthase subunit F, found in Methanoregula boonei (strain DSM 21154 / JCM 14090 / 6A8).